The sequence spans 336 residues: uncharacterized protein (336 aa).

The tract at residues 162–195 is disordered; that stretch reads ARGLPVHSSFKQNNSSQTSSNKGTTTVAAGSGSD. Residues 169–187 are compositionally biased toward low complexity; the sequence is SSFKQNNSSQTSSNKGTTT.

This sequence belongs to the AHA1 family.

This is an uncharacterized protein from Schizosaccharomyces pombe (strain 972 / ATCC 24843) (Fission yeast).